A 135-amino-acid polypeptide reads, in one-letter code: ATP synthase epsilon chain (135 aa).

Residues 101 to 122 form a disordered region; it reads TAVTKLEGQPSTPEKVKAQQLF.

The protein belongs to the ATPase epsilon chain family. F-type ATPases have 2 components, CF(1) - the catalytic core - and CF(0) - the membrane proton channel. CF(1) has five subunits: alpha(3), beta(3), gamma(1), delta(1), epsilon(1). CF(0) has three main subunits: a, b and c.

The protein resides in the cellular thylakoid membrane. Produces ATP from ADP in the presence of a proton gradient across the membrane. The sequence is that of ATP synthase epsilon chain from Synechococcus sp. (strain CC9311).